Here is a 583-residue protein sequence, read N- to C-terminus: MLO-like protein 6 (583 aa).

At 1–15 (MADQVKEKTLEETST) the chain is on the extracellular side. Residues 16 to 36 (WAVAVVCFVLLLISIVIEKLI) form a helical membrane-spanning segment. Topologically, residues 37–61 (HKIGSWFKKKNKKALYEALEKVKAE) are cytoplasmic. The chain crosses the membrane as a helical span at residues 62 to 82 (LMLMGFISLLLTIGQGYISNI). Over 83 to 161 (CIPKNIAASM…VSAYGMHQLH (79 aa)) the chain is Extracellular. The chain crosses the membrane as a helical span at residues 162 to 182 (IFIFVLAVCHVIYCIVTYALG). At 183 to 284 (KTKMRRWKKW…KYIQRSLEED (102 aa)) the chain is on the cytoplasmic side. The chain crosses the membrane as a helical span at residues 285-305 (FKTIVEINPVIWFIAVLFLLT). Topologically, residues 306–314 (NTNGLNSYL) are extracellular. The helical transmembrane segment at 315 to 335 (WLPFIPFIVILIVGTKLQVII) threads the bilayer. Over 336-368 (TKLGLRIQEKGDVVKGTPLVQPGDHFFWFGRPR) the chain is Cytoplasmic. Residues 369–389 (FILFLIHLVLFTNAFQLAFFV) traverse the membrane as a helical segment. At 390 to 411 (WSTYEFGLKNCFHESRVDVIIR) the chain is on the extracellular side. Residues 412-432 (ISIGLLVQILCSYVTLPLYAL) form a helical membrane-spanning segment. Over 433-583 (VTQMGSKMKP…ISLRDFSFKR (151 aa)) the chain is Cytoplasmic. The interval 447–468 (ERVATALKSWHHTAKKNIKHGR) is calmodulin-binding. The interval 461–583 (KKNIKHGRTS…ISLRDFSFKR (123 aa)) is disordered. Over residues 470–484 (SESTTPFSSRPTTPT) the composition is skewed to low complexity. The segment covering 541–551 (RFGEEESEKKF) has biased composition (basic and acidic residues).

It belongs to the MLO family.

It is found in the membrane. May be involved in modulation of pathogen defense and leaf cell death. Activity seems to be regulated by Ca(2+)-dependent calmodulin binding and seems not to require heterotrimeric G proteins. The chain is MLO-like protein 6 (MLO6) from Arabidopsis thaliana (Mouse-ear cress).